A 97-amino-acid chain; its full sequence is HssA/B-like protein 48 (97 aa).

Disordered stretches follow at residues 1 to 20 and 78 to 97; these read MTLFASISSISNPSTSSKSS and GSGYPGNGGMGGGNGSCCGI.

The protein belongs to the hssA/B family.

The chain is HssA/B-like protein 48 (hssl48) from Dictyostelium discoideum (Social amoeba).